Reading from the N-terminus, the 524-residue chain is Excitatory amino acid transporter 3 (524 aa).

Topologically, residues 1 to 18 (MGKPARKGCDSKRFLKNN) are cytoplasmic. A helical membrane pass occupies residues 19 to 38 (WLLLSTVVAVVLGIVIGVLV). The Extracellular segment spans residues 39–61 (REYSNLSTLDKFYFAFPGEILMR). N43 is a glycosylation site (N-linked (GlcNAc...) asparagine). Residues 62 to 82 (MLKLVILPLIVSSMITGVAAL) traverse the membrane as a helical segment. At 83 to 93 (DSNVSGKIGLR) the chain is on the cytoplasmic side. The helical transmembrane segment at 94 to 114 (AVLYYFCTTIIAVILGIVLVV) threads the bilayer. Residues Y98, T101, and T102 each coordinate Na(+). Topologically, residues 115 to 205 (SIKPGVTQKV…RTKEYRVVGL (91 aa)) are extracellular. 2 N-linked (GlcNAc...) asparagine glycosylation sites follow: N178 and N195. A helical membrane pass occupies residues 206 to 229 (YSDGINVLGLIVFCLVFGLVIGKM). Over 230–238 (GEKGQILVD) the chain is Cytoplasmic. Residues 239–266 (FFNALSDATMKIVQIIMCYMPLGILFLI) form a helical membrane-spanning segment. Over 267-286 (AGKIIEVEDWEIFRKLGLYM) the chain is Extracellular. A helical transmembrane segment spans residues 287–308 (VTVLSGLAIHSIVILPLIYFIV). Over 309–313 (VRKNP) the chain is Cytoplasmic. The segment at residues 314–344 (FRFAMGMTQALLTALMISSSSATLPVTFRCA) is an intramembrane region (discontinuously helical). Residues S331 and S333 each coordinate L-aspartate. Residues 345–353 (EEKNRVDKR) lie on the Cytoplasmic side of the membrane. A helical membrane pass occupies residues 354-380 (ITRFVLPVGATINMDGTALYEAVAAVF). Positions 362, 364, 366, and 368 each coordinate Na(+). T370 contributes to the L-aspartate binding site. Residues 381–393 (IAQLNDMDLSIGQ) are Extracellular-facing. An intramembrane region (discontinuously helical) is located at residues 394-427 (IITISVTATAASIGAAGVPQAGLVTMVIVLSAVG). 3 residues coordinate Na(+): S405, I406, and A408. L-aspartate is bound at residue V411. Topologically, residues 428–440 (LPAEDVTLIIAVD) are extracellular. The helical transmembrane segment at 441 to 462 (WLLDRFRTVVNVLGDAFGTGIV) threads the bilayer. L-aspartate-binding residues include R447, T448, and N451. The Na(+) site is built by N451 and D455. Over 463–524 (EKLSKKELEQ…TISFTQTSQF (62 aa)) the chain is Cytoplasmic. Phosphoserine occurs at positions 517 and 522.

It belongs to the dicarboxylate/amino acid:cation symporter (DAACS) (TC 2.A.23) family. SLC1A1 subfamily. In terms of assembly, homotrimer. Interacts with ARL6IP5. Interacts with RTN2 (via N-terminus); the interaction promotes cell surface expression of SLC1A1. Interacts with SORCS2; this interaction is important for normal expression at the cell membrane. Brain, but also small intestine, kidney, liver and heart.

Its subcellular location is the cell membrane. It localises to the apical cell membrane. It is found in the synapse. The protein localises to the synaptosome. The protein resides in the early endosome membrane. Its subcellular location is the late endosome membrane. It localises to the recycling endosome membrane. It carries out the reaction K(+)(in) + L-glutamate(out) + 3 Na(+)(out) + H(+)(out) = K(+)(out) + L-glutamate(in) + 3 Na(+)(in) + H(+)(in). The catalysed reaction is K(+)(in) + L-aspartate(out) + 3 Na(+)(out) + H(+)(out) = K(+)(out) + L-aspartate(in) + 3 Na(+)(in) + H(+)(in). The enzyme catalyses D-aspartate(out) + K(+)(in) + 3 Na(+)(out) + H(+)(out) = D-aspartate(in) + K(+)(out) + 3 Na(+)(in) + H(+)(in). It catalyses the reaction K(+)(in) + L-cysteine(out) + 3 Na(+)(out) + H(+)(out) = K(+)(out) + L-cysteine(in) + 3 Na(+)(in) + H(+)(in). Functionally, sodium-dependent, high-affinity amino acid transporter that mediates the uptake of L-glutamate and also L-aspartate and D-aspartate. Can also transport L-cysteine. Functions as a symporter that transports one amino acid molecule together with two or three Na(+) ions and one proton, in parallel with the counter-transport of one K(+) ion. Mediates Cl(-) flux that is not coupled to amino acid transport; this avoids the accumulation of negative charges due to aspartate and Na(+) symport. Plays an important role in L-glutamate and L-aspartate reabsorption in renal tubuli. Plays a redundant role in the rapid removal of released glutamate from the synaptic cleft, which is essential for terminating the postsynaptic action of glutamate. Contributes to glutathione biosynthesis and protection against oxidative stress via its role in L-glutamate and L-cysteine transport. Negatively regulated by ARL6IP5. The chain is Excitatory amino acid transporter 3 (SLC1A1) from Oryctolagus cuniculus (Rabbit).